The following is a 226-amino-acid chain: Ribonuclease 3 (226 aa).

The RNase III domain occupies 7–129 (LARLSRTLGY…IIGAVYLDAN (123 aa)). Position 42 (glutamate 42) interacts with Mg(2+). Residue aspartate 46 is part of the active site. 2 residues coordinate Mg(2+): aspartate 115 and glutamate 118. Residue glutamate 118 is part of the active site. A DRBM domain is found at 156–226 (DPKTILQEYL…AAQILELINK (71 aa)).

Belongs to the ribonuclease III family. As to quaternary structure, homodimer. The cofactor is Mg(2+).

It localises to the cytoplasm. It carries out the reaction Endonucleolytic cleavage to 5'-phosphomonoester.. Functionally, digests double-stranded RNA. Involved in the processing of primary rRNA transcript to yield the immediate precursors to the large and small rRNAs (23S and 16S). Processes some mRNAs, and tRNAs when they are encoded in the rRNA operon. Processes pre-crRNA and tracrRNA of type II CRISPR loci if present in the organism. The chain is Ribonuclease 3 from Shewanella denitrificans (strain OS217 / ATCC BAA-1090 / DSM 15013).